The chain runs to 197 residues: Ion-translocating oxidoreductase complex subunit B (197 aa).

The segment at 1–26 is hydrophobic; the sequence is MSTILIAIIALAALAAVFGAILGFAS. In terms of domain architecture, 4Fe-4S spans 32 to 90; the sequence is EADPIVDQIDSILPQTQCGQCGYPGCRPYAEAIANGDQINKCPPGGQATIEKLADLMGV. Cys49, Cys52, Cys57, Cys73, Cys114, Cys117, Cys120, Cys124, Cys144, Cys147, Cys150, and Cys154 together coordinate [4Fe-4S] cluster. 4Fe-4S ferredoxin-type domains lie at 105–134 and 135–164; these read TVAF…GGTK and ALHT…MIPV.

This sequence belongs to the 4Fe4S bacterial-type ferredoxin family. RnfB subfamily. As to quaternary structure, the complex is composed of six subunits: RnfA, RnfB, RnfC, RnfD, RnfE and RnfG. It depends on [4Fe-4S] cluster as a cofactor.

It is found in the cell inner membrane. In terms of biological role, part of a membrane-bound complex that couples electron transfer with translocation of ions across the membrane. The protein is Ion-translocating oxidoreductase complex subunit B of Vibrio campbellii (strain ATCC BAA-1116).